A 630-amino-acid polypeptide reads, in one-letter code: MAKHQFQTEANQILNLMIHSLYSNKEIFIRELVSNASDALDKLNMLVLTNDEYKGVNFSPRIDIIADKEAKTLTIKDSGIGMNEEDLMNNLGTIAKSGTKAFLENLSGDQKKDSHLIGQFGVGFYASFMVAHKVEVTTKKAATEQAYLWISKGDGEFEIEKTTRESHGTTIVMHLNDDESEFLDSYRIEGIIKKYSNHIPFAIFMDKDKFIPAKKDEDGKEIEPSRNEVENIQINRANALWTISKNEISDEEYKDFYSSIAHSSEEPLAWMHNKAEGAIEYTTLFYIPSKAPMDMYRVDYQTGIKLYINRVFITDDEKELMPTYLRFLRGVIDSKDLPLNVSREILQSNAVMAKIKNASVKKVLSELAKMAKRDAKKYDDFFTQFGNVLKEGLYSDYGNRENILELLKFNTINSDEKIMIEEFIKNVDETKKEIYYITGKTSLSMLKSSPALERFKSRGINVLVLNEEIDTIIFPMVTEYKEYKLIHVNDVKFEENENDKKAQEKSSKEFEGLTKELKESLGDSVKSVEVTFDLVDSPVKLKEDKEDPAFMMAQIMKQMGQSGDTPAPAPILQINPKHELIIKLKNSADINLINDAAHLLLDQAKLFDGVQLEDTAGFVLRLNRVIAKAI.

The segment at M1–R343 is a; substrate-binding. Residues E344 to Q554 form a b region. The segment at I555 to I630 is c.

This sequence belongs to the heat shock protein 90 family. Homodimer.

The protein resides in the cytoplasm. In terms of biological role, molecular chaperone. Has ATPase activity. This chain is Chaperone protein HtpG, found in Sulfurimonas denitrificans (strain ATCC 33889 / DSM 1251) (Thiomicrospira denitrificans (strain ATCC 33889 / DSM 1251)).